A 178-amino-acid polypeptide reads, in one-letter code: Ribosome maturation factor RimP (178 aa).

Belongs to the RimP family.

Its subcellular location is the cytoplasm. Required for maturation of 30S ribosomal subunits. This chain is Ribosome maturation factor RimP, found in Cutibacterium acnes (strain DSM 16379 / KPA171202) (Propionibacterium acnes).